The sequence spans 136 residues: Peptide methionine sulfoxide reductase MsrB (136 aa).

The region spanning 6–128 (EVSLYKELTD…NSAALSFTDE (123 aa)) is the MsrB domain. Zn(2+) is bound by residues cysteine 45, cysteine 48, cysteine 94, and cysteine 97. Catalysis depends on cysteine 117, which acts as the Nucleophile.

Belongs to the MsrB Met sulfoxide reductase family. The cofactor is Zn(2+).

It catalyses the reaction L-methionyl-[protein] + [thioredoxin]-disulfide + H2O = L-methionyl-(R)-S-oxide-[protein] + [thioredoxin]-dithiol. In Photorhabdus laumondii subsp. laumondii (strain DSM 15139 / CIP 105565 / TT01) (Photorhabdus luminescens subsp. laumondii), this protein is Peptide methionine sulfoxide reductase MsrB.